Here is a 318-residue protein sequence, read N- to C-terminus: Aspartate carbamoyltransferase catalytic subunit (318 aa).

Carbamoyl phosphate-binding residues include arginine 59 and threonine 60. Lysine 87 contributes to the L-aspartate binding site. Arginine 109, histidine 137, and glutamine 140 together coordinate carbamoyl phosphate. The L-aspartate site is built by arginine 170 and arginine 224. Carbamoyl phosphate is bound by residues glycine 265 and proline 266.

This sequence belongs to the aspartate/ornithine carbamoyltransferase superfamily. ATCase family. Heterododecamer (2C3:3R2) of six catalytic PyrB chains organized as two trimers (C3), and six regulatory PyrI chains organized as three dimers (R2).

The enzyme catalyses carbamoyl phosphate + L-aspartate = N-carbamoyl-L-aspartate + phosphate + H(+). It functions in the pathway pyrimidine metabolism; UMP biosynthesis via de novo pathway; (S)-dihydroorotate from bicarbonate: step 2/3. Catalyzes the condensation of carbamoyl phosphate and aspartate to form carbamoyl aspartate and inorganic phosphate, the committed step in the de novo pyrimidine nucleotide biosynthesis pathway. The sequence is that of Aspartate carbamoyltransferase catalytic subunit from Rhizobium etli (strain ATCC 51251 / DSM 11541 / JCM 21823 / NBRC 15573 / CFN 42).